The chain runs to 227 residues: CDP-diacylglycerol--glycerol-3-phosphate 3-phosphatidyltransferase (227 aa).

Helical transmembrane passes span 30-50 (IFIA…GSVA), 58-78 (VTIH…TAVI), 112-132 (VLIA…VIVL), 159-179 (WKTT…SFSL), and 192-212 (WAIV…SFGI).

Belongs to the CDP-alcohol phosphatidyltransferase class-I family.

The protein localises to the cell membrane. The enzyme catalyses a CDP-1,2-diacyl-sn-glycerol + sn-glycerol 3-phosphate = a 1,2-diacyl-sn-glycero-3-phospho-(1'-sn-glycero-3'-phosphate) + CMP + H(+). It participates in phospholipid metabolism; phosphatidylglycerol biosynthesis; phosphatidylglycerol from CDP-diacylglycerol: step 1/2. Its function is as follows. This protein catalyzes the committed step to the synthesis of the acidic phospholipids. This Mycoplasma pneumoniae (strain ATCC 29342 / M129 / Subtype 1) (Mycoplasmoides pneumoniae) protein is CDP-diacylglycerol--glycerol-3-phosphate 3-phosphatidyltransferase (pgsA).